The primary structure comprises 98 residues: uncharacterized protein (98 aa).

It belongs to the CFAP97 family. In terms of tissue distribution, expressed in a number of tissues including brain, thymus, lung, heart, liver, spleen, kidney and testis.

This is an uncharacterized protein from Mus musculus (Mouse).